We begin with the raw amino-acid sequence, 95 residues long: Aspartyl/glutamyl-tRNA(Asn/Gln) amidotransferase subunit C (95 aa).

Belongs to the GatC family. In terms of assembly, heterotrimer of A, B and C subunits.

It catalyses the reaction L-glutamyl-tRNA(Gln) + L-glutamine + ATP + H2O = L-glutaminyl-tRNA(Gln) + L-glutamate + ADP + phosphate + H(+). It carries out the reaction L-aspartyl-tRNA(Asn) + L-glutamine + ATP + H2O = L-asparaginyl-tRNA(Asn) + L-glutamate + ADP + phosphate + 2 H(+). Allows the formation of correctly charged Asn-tRNA(Asn) or Gln-tRNA(Gln) through the transamidation of misacylated Asp-tRNA(Asn) or Glu-tRNA(Gln) in organisms which lack either or both of asparaginyl-tRNA or glutaminyl-tRNA synthetases. The reaction takes place in the presence of glutamine and ATP through an activated phospho-Asp-tRNA(Asn) or phospho-Glu-tRNA(Gln). The protein is Aspartyl/glutamyl-tRNA(Asn/Gln) amidotransferase subunit C of Rhizorhabdus wittichii (strain DSM 6014 / CCUG 31198 / JCM 15750 / NBRC 105917 / EY 4224 / RW1) (Sphingomonas wittichii).